We begin with the raw amino-acid sequence, 441 residues long: UDP-N-acetylmuramoylalanine--D-glutamate ligase (441 aa).

129 to 135 (GTNGKST) lines the ATP pocket.

The protein belongs to the MurCDEF family.

It localises to the cytoplasm. It carries out the reaction UDP-N-acetyl-alpha-D-muramoyl-L-alanine + D-glutamate + ATP = UDP-N-acetyl-alpha-D-muramoyl-L-alanyl-D-glutamate + ADP + phosphate + H(+). It functions in the pathway cell wall biogenesis; peptidoglycan biosynthesis. Cell wall formation. Catalyzes the addition of glutamate to the nucleotide precursor UDP-N-acetylmuramoyl-L-alanine (UMA). This Zymomonas mobilis subsp. mobilis (strain ATCC 31821 / ZM4 / CP4) protein is UDP-N-acetylmuramoylalanine--D-glutamate ligase.